A 130-amino-acid chain; its full sequence is Large ribosomal subunit protein bL19 (130 aa).

It belongs to the bacterial ribosomal protein bL19 family.

This protein is located at the 30S-50S ribosomal subunit interface and may play a role in the structure and function of the aminoacyl-tRNA binding site. The sequence is that of Large ribosomal subunit protein bL19 from Psychrobacter arcticus (strain DSM 17307 / VKM B-2377 / 273-4).